Consider the following 488-residue polypeptide: UDP-N-acetylmuramate--L-alanine ligase (488 aa).

127–133 contributes to the ATP binding site; that stretch reads GTHGKTT.

Belongs to the MurCDEF family.

The protein resides in the cytoplasm. The enzyme catalyses UDP-N-acetyl-alpha-D-muramate + L-alanine + ATP = UDP-N-acetyl-alpha-D-muramoyl-L-alanine + ADP + phosphate + H(+). It functions in the pathway cell wall biogenesis; peptidoglycan biosynthesis. Cell wall formation. The chain is UDP-N-acetylmuramate--L-alanine ligase from Shewanella oneidensis (strain ATCC 700550 / JCM 31522 / CIP 106686 / LMG 19005 / NCIMB 14063 / MR-1).